Reading from the N-terminus, the 417-residue chain is Nuclear envelope integral membrane protein 2 (417 aa).

The first 24 residues, 1 to 24 (MGPRQGRWWLLLWLPPLATLPVRG), serve as a signal peptide directing secretion. A run of 5 helical transmembrane segments spans residues 148–168 (NIMD…FFYA), 177–197 (FYYS…VLLL), 207–227 (TFWA…CQLM), 239–259 (IYVL…CYKH), and 280–300 (LVLV…IILL).

This sequence belongs to the NEMP family.

The protein localises to the nucleus inner membrane. The polypeptide is Nuclear envelope integral membrane protein 2 (NEMP2) (Homo sapiens (Human)).